The following is a 129-amino-acid chain: Glycine cleavage system H protein (129 aa).

Residues 24 to 106 form the Lipoyl-binding domain; the sequence is LIRVGISAFA…HGAGWLLVVR (83 aa). Lys65 is modified (N6-lipoyllysine).

Belongs to the GcvH family. As to quaternary structure, the glycine cleavage system is composed of four proteins: P, T, L and H. The cofactor is (R)-lipoate.

Its function is as follows. The glycine cleavage system catalyzes the degradation of glycine. The H protein shuttles the methylamine group of glycine from the P protein to the T protein. This Synechococcus sp. (strain CC9902) protein is Glycine cleavage system H protein.